The following is a 374-amino-acid chain: Cell wall integrity and stress response component 1 (374 aa).

Positions Met1–Ala29 are cleaved as a signal peptide. Topologically, residues Asp30–Ala292 are extracellular. One can recognise a WSC domain in the interval Met31–Gly119. Positions Val132 to Ser236 are disordered. 2 N-linked (GlcNAc...) asparagine glycosylation sites follow: Asn278 and Asn284. Residues Ile293–Leu313 form a helical membrane-spanning segment. Over Tyr314–Asn374 the chain is Cytoplasmic. Residue Ser354 is modified to Phosphoserine.

In terms of processing, O-mannosylated.

Its subcellular location is the membrane. The sequence is that of Cell wall integrity and stress response component 1 (wsc1) from Schizosaccharomyces pombe (strain 972 / ATCC 24843) (Fission yeast).